The following is a 475-amino-acid chain: Threonine synthase (475 aa).

Lys-120 is subject to N6-(pyridoxal phosphate)lysine.

The protein belongs to the threonine synthase family. Pyridoxal 5'-phosphate serves as cofactor.

It catalyses the reaction O-phospho-L-homoserine + H2O = L-threonine + phosphate. It participates in amino-acid biosynthesis; L-threonine biosynthesis; L-threonine from L-aspartate: step 5/5. Its function is as follows. Catalyzes the gamma-elimination of phosphate from L-phosphohomoserine and the beta-addition of water to produce L-threonine. The chain is Threonine synthase (thrC) from Methylobacillus glycogenes.